The sequence spans 743 residues: Elongation factor 2 (743 aa).

Residues Asn-19–Lys-265 form the tr-type G domain. Residues Ala-28 to Thr-35, Asp-94 to His-98, and Asn-148 to Asp-151 contribute to the GTP site. The residue at position 615 (His-615) is a Diphthamide.

The protein belongs to the TRAFAC class translation factor GTPase superfamily. Classic translation factor GTPase family. EF-G/EF-2 subfamily.

The protein localises to the cytoplasm. Functionally, catalyzes the GTP-dependent ribosomal translocation step during translation elongation. During this step, the ribosome changes from the pre-translocational (PRE) to the post-translocational (POST) state as the newly formed A-site-bound peptidyl-tRNA and P-site-bound deacylated tRNA move to the P and E sites, respectively. Catalyzes the coordinated movement of the two tRNA molecules, the mRNA and conformational changes in the ribosome. The chain is Elongation factor 2 from Nanoarchaeum equitans (strain Kin4-M).